The chain runs to 412 residues: CCA-adding enzyme (412 aa).

Residues S41 and K44 each coordinate ATP. Residues S41 and K44 each contribute to the CTP site. Mg(2+)-binding residues include D53, D55, and D106. 3 residues coordinate ATP: H129, K149, and Y158. 3 residues coordinate CTP: H129, K149, and Y158.

The protein belongs to the tRNA nucleotidyltransferase/poly(A) polymerase family. Archaeal CCA-adding enzyme subfamily. Homodimer. The cofactor is Mg(2+).

It carries out the reaction a tRNA precursor + 2 CTP + ATP = a tRNA with a 3' CCA end + 3 diphosphate. It catalyses the reaction a tRNA with a 3' CCA end + 2 CTP + ATP = a tRNA with a 3' CCACCA end + 3 diphosphate. Its function is as follows. Catalyzes the addition and repair of the essential 3'-terminal CCA sequence in tRNAs without using a nucleic acid template. Adds these three nucleotides in the order of C, C, and A to the tRNA nucleotide-73, using CTP and ATP as substrates and producing inorganic pyrophosphate. tRNA 3'-terminal CCA addition is required both for tRNA processing and repair. Also involved in tRNA surveillance by mediating tandem CCA addition to generate a CCACCA at the 3' terminus of unstable tRNAs. While stable tRNAs receive only 3'-terminal CCA, unstable tRNAs are marked with CCACCA and rapidly degraded. The polypeptide is CCA-adding enzyme (Saccharolobus islandicus (strain Y.G.57.14 / Yellowstone #1) (Sulfolobus islandicus)).